A 470-amino-acid chain; its full sequence is Peripherin (470 aa).

Positions 1-99 (MSHHPSGLRA…FLATRSNEKQ (99 aa)) are head. 3'-nitrotyrosine is present on Tyr-17. Phosphoserine occurs at positions 28, 50, and 59. The region spanning 97–407 (EKQELQELND…KLLEGEESRI (311 aa)) is the IF rod domain. Residues 100 to 132 (ELQELNDRFANFIEKVRFLEQQNAALRGELSQA) form a coil 1A region. Residues 133-143 (RGQEPARADQL) are linker 1. Positions 144 to 239 (CQQELRELRR…KLHEEELRDL (96 aa)) are coil 1B. The linker 2 stretch occupies residues 240-262 (QVSVESQQVQQVEVEATVKPELT). The tract at residues 263–405 (AALRDIRAQY…YRKLLEGEES (143 aa)) is coil 2. At Tyr-379 the chain carries 3'-nitrotyrosine. The tract at residues 406–470 (RISVPVHSFA…ELDKSSAHSY (65 aa)) is tail. Residues 447 to 470 (NGEVVTESQKEQRSELDKSSAHSY) form a disordered region. Residues 454–470 (SQKEQRSELDKSSAHSY) show a composition bias toward basic and acidic residues. Tyr-470 carries the post-translational modification Phosphotyrosine.

The protein belongs to the intermediate filament family. As to quaternary structure, forms homodimers (in vitro). Homopolymerizes into a filamentous network (in vitro). Forms heterodimers with NEFL, NEFM or NEFH (in vitro). Interacts with DST (via C-terminus). Interacts with RAB7A; the interaction is direct. Interacts with PRKCE (via phorbol-ester/DAG-type 2 domain). Phosphorylated; phosphorylation increases after nerve injury in regenerating neurons. In terms of tissue distribution, expressed in the neurons of the outer hair cells in the organ of Corti and to a lesser extent in type I spiral ganglion cells.

It localises to the cytoplasm. The protein localises to the cytoskeleton. It is found in the cell projection. The protein resides in the axon. Its subcellular location is the perikaryon. Functionally, class-III neuronal intermediate filament protein. May form an independent structural network without the involvement of other neurofilaments or may cooperate with the neuronal intermediate filament proteins NEFL, NEFH, NEFM and INA to form a filamentous network. Assembly of the neuronal intermediate filaments may be regulated by RAB7A. Plays a role in the development of unmyelinated sensory neurons. May be involved in axon elongation and axon regeneration after injury. Inhibits neurite extension in type II spiral ganglion neurons in the cochlea. This chain is Peripherin (PRPH), found in Homo sapiens (Human).